The primary structure comprises 228 residues: MGRRPARCYRQIKNKPYPKSRYCRGVPDPKIRIFDVGAKKRLVDEFPFCVHLVSWEKENVSSEALEAGRIACNKYMVKFAGKDGFHLRVRVHPFHVLRSNKMLSCAGADRLQTGMRGAFGKPQGTCARVAIGQVLLSVRSRDNHSNHAQEALRRAKFKFPGREKIIVNRKWGFTKYTRADYLKWKTENRIVPDGVNPKLLGCRGPLSNRKPGQAFLKPAVVLSSDLVA.

It belongs to the universal ribosomal protein uL16 family. As to quaternary structure, component of the small ribosomal subunit. Mature ribosomes consist of a small (40S) and a large (60S) subunit. The 40S subunit contains about 33 different proteins and 1 molecule of RNA (18S). The 60S subunit contains about 49 different proteins and 3 molecules of RNA (25S, 5.8S and 5S).

The protein is Large ribosomal subunit protein uL16 (RPL10) of Pinus taeda (Loblolly pine).